The sequence spans 176 residues: MPILTDFKAIATGLFVTWKHIFRRPVTVEYPEVKRTPAPRYRARIVLTRDPDGGERCVACYLCSAACPVDCISMEAAEGEEGRRYARWFRINFSRCIFCGLCAEACPTLAIQMTPDYEICERDIMELVYEKEDLLIDGCGKDAGYNFYRHAGIGVAQPRGAGECEEEPVDVRGLMP.

2 4Fe-4S ferredoxin-type domains span residues 45–77 and 87–116; these read IVLTRDPDGGERCVACYLCSAACPVDCISMEAA and RWFRINFSRCIFCGLCAEACPTLAIQMTPD. Residues cysteine 57, cysteine 60, cysteine 63, cysteine 67, cysteine 96, cysteine 99, cysteine 102, and cysteine 106 each contribute to the [4Fe-4S] cluster site.

Belongs to the complex I 23 kDa subunit family. As to quaternary structure, NDH-1 is composed of 14 different subunits. Subunits NuoA, H, J, K, L, M, N constitute the membrane sector of the complex. [4Fe-4S] cluster is required as a cofactor.

It localises to the cell inner membrane. It catalyses the reaction a quinone + NADH + 5 H(+)(in) = a quinol + NAD(+) + 4 H(+)(out). NDH-1 shuttles electrons from NADH, via FMN and iron-sulfur (Fe-S) centers, to quinones in the respiratory chain. The immediate electron acceptor for the enzyme in this species is believed to be ubiquinone. Couples the redox reaction to proton translocation (for every two electrons transferred, four hydrogen ions are translocated across the cytoplasmic membrane), and thus conserves the redox energy in a proton gradient. This Geobacter sulfurreducens (strain ATCC 51573 / DSM 12127 / PCA) protein is NADH-quinone oxidoreductase subunit I 2.